Here is a 237-residue protein sequence, read N- to C-terminus: Phosphoribosylaminoimidazole-succinocarboxamide synthase (237 aa).

It belongs to the SAICAR synthetase family.

The enzyme catalyses 5-amino-1-(5-phospho-D-ribosyl)imidazole-4-carboxylate + L-aspartate + ATP = (2S)-2-[5-amino-1-(5-phospho-beta-D-ribosyl)imidazole-4-carboxamido]succinate + ADP + phosphate + 2 H(+). It participates in purine metabolism; IMP biosynthesis via de novo pathway; 5-amino-1-(5-phospho-D-ribosyl)imidazole-4-carboxamide from 5-amino-1-(5-phospho-D-ribosyl)imidazole-4-carboxylate: step 1/2. This is Phosphoribosylaminoimidazole-succinocarboxamide synthase from Sodalis glossinidius (strain morsitans).